Here is a 352-residue protein sequence, read N- to C-terminus: Thymidine kinase (352 aa).

An ATP-binding site is contributed by 26-33 (GSMGIGKT). The Proton acceptor role is filled by Glu54. Residue Gln95 coordinates substrate. Arg185 serves as a coordination point for ATP. Arg191 provides a ligand contact to substrate.

This sequence belongs to the herpesviridae thymidine kinase family. In terms of assembly, homodimer.

The enzyme catalyses thymidine + ATP = dTMP + ADP + H(+). In terms of biological role, catalyzes the transfer of the gamma-phospho group of ATP to thymidine to generate dTMP in the salvage pathway of pyrimidine synthesis. The dTMP serves as a substrate for DNA polymerase during viral DNA replication. Allows the virus to be reactivated and to grow in non-proliferative cells lacking a high concentration of phosphorylated nucleic acid precursors. The sequence is that of Thymidine kinase from Gallid herpesvirus 2 (strain Chicken/Md5/ATCC VR-987) (GaHV-2).